The sequence spans 152 residues: UPF0266 membrane protein YobD (152 aa).

Helical transmembrane passes span Leu-6–Met-26, Ile-45–His-65, and Ala-67–Ile-87.

This sequence belongs to the UPF0266 family.

It localises to the cell inner membrane. The sequence is that of UPF0266 membrane protein YobD from Shigella boydii serotype 18 (strain CDC 3083-94 / BS512).